We begin with the raw amino-acid sequence, 432 residues long: Transcriptional adapter 3-A (432 aa).

Disordered stretches follow at residues 90–127 (HELG…RNMQ) and 275–314 (SPVE…TKSL). The span at 293–305 (DGASTSPRSQNKP) shows a compositional bias: polar residues. The stretch at 335-398 (ADDSEDEVLA…NEVMDAFRKI (64 aa)) forms a coiled coil.

The protein belongs to the NGG1 family.

Its subcellular location is the nucleus. Its function is as follows. Functions as a component of the PCAF complex. The PCAF complex is capable of efficiently acetylating histones in a nucleosomal context. This chain is Transcriptional adapter 3-A (tada3-a), found in Xenopus laevis (African clawed frog).